The chain runs to 1959 residues: MCDAAAATATTTTTAAVAAAVATTTASVALEATATQPGTTTTTVATASAGTTSPEAAIPTAATATSARNSNSERSARQNCCRLCIAPQTECISIINSYAADKEPLSTKIHNCVGIKVTPQDRLSQQICHACISYLNSWQSFKNRCFSSQAKQRQWLDTNKSKLLNYLDLNSAENGGGGFFDQHLHQQQQHHQHLENELEAEKEKATPTAASTAANILDGIHSLKKRKSLTVYPLPAMPIKDEPIDTDDDYQMKSIDESDDMVDPTMFLERSEHEGDVPLTASDYDYTAQHGVNASSVAASLPPNAVANVAAAGDSKVASCRACSLQFSTRANARRHERNLHPNLFQLSTDSPHNTPITKPTPALAAALEMQRAAAAAATAEANRAAGAAGGNISTQKYRQVVMNAFIKCEGGGYDYDNPEQYRPLLTRDKVEFIEQNDEFLEQYQTMTCRCCNKYFSTYKNFMAHVRKKYPQLPRNLCFNCLKMNDSKALFISHLKKRNCINLFRVLNALRGKTTTVVVPIADDVADDGATGSIPVADAGAGVVAMNSPTVTASGEVVTPGGGSERPEKLRAKELLVNKLYECKLCPKGFRTKHEFRTHVYDKHADVQRKDNNSIQCSFCGLDFADPVDRRRHYNNMDCIVRLRCMTCDAKLETHQRFLDHVYQDHLGGVGGGAVSDNASTTGSGMARSNSMEHSPGKRSLLGALGVGSSAEESRSSSAAPPLTSTPKLAGGNQVGGGGSTSASAAAAAQSSANRDASAPKSQYFSRMPQVCPICGQQYNNYNNVLRHMESKHPNKLPETYKCVRCGLGYPRISYLREHMINVHGVDKNRHSGGFEYIVNADAVKLADGSTPNVYTGRYDYVMKDLMSITNGGTLDDEEEEPGSVAKKMRLDDSSNNSSLVGVASQQKECPICNAVFSNNIGLSNHMRSHYTASNAVNAALAAANRMTPKSLTITATPATDSELGVGGTMSESAPATPANVPPAMANQTPQEQAVFRRSLDQAADRRFRRMRCRICQRRFSSKKSYRYHMLTDHQVQNVQFIKCKLCNAEFAYEKGLKVHLFKVHGKAIKDEMIIKQFECDVCSIVYSSESELQQHKRSVHKLTSASASTSASTSSKIDDDSLMDDGKPTSSDLADLSTLAAGGSTASAPLYWYQCKYCPSNFNTNKKLAIHINSHDEFDSNDYSCKDCGNVYSGRKSLWVHRYKKHPQVPNPAECSLCRKVFFDRQMHDNHTPTCNRKPITSTGAHQQQDGQLHSHHTAKRTIFRHKTGDDDDEEDDDEQQQLEERANSDGNGTTVGVASGSTAAAGTSLKIRIPEVACTICGARFTDQEHFSKHIQKHEQELYVDNPLAAMFDDGPADAGQFQVERQNENGEYACDLCAKTFPQVIALKVHRKWHFRGDSKQNPIDGEATQLTNNNHTTNNNNNNSMHLRELHAVGLMPNQQQQSLNNSCNSSMNHNNNSSSNRSKSMKRKRELKCEYCASTFISNNNLRRHMYELHKHEVSNLPEPPVIVVDDHLTCRRCQLKFDTKELWIEHKLADAKVVRPFCPFQWGCDLCGEYLSRKEKLMNHINNHLKEEVIVPVATKAAIERTAAMESAAADANAAATLSALGEGAETEDQFAEKVEAAGATTTDKLTNPDEEDSDDLDEDSSGDDDDSSGTGDDDDDDDSDDDEDGEGEDEDEEGDGGEGEDEEGVQPPAQLLPQQQHKTDLNLNQDDDDLVEEVISSDDDEDDDGEVESDDDDEDDDDEEDDVEEPEPVGLTVRPLMNGKSKMPPLIVASSDDEDDGVMPIEDIIEEEFDEDADPDPEDAIEEVDEDDLDEGEVEDEPNVVSTASFSESESSTTTTSNSHSHSHSTGERRKKAVDQLNDPGFTCDLCQLCFDSQELLQSHIKSHILNGPKLSTVSAAAAAAAAAATASSKATALLTAAKAKPDSKSAVLANNNNSKTSSKTVAAGATN.

A ZAD domain is found at N79–W155. The Zn(2+) site is built by C81, C84, C128, and C131. The interval G178–T208 is disordered. Residues Q192–A205 show a composition bias toward basic and acidic residues. S228 is modified (phosphoserine). The residue at position 246 (T246) is a Phosphothreonine. The C2H2-type 1 zinc finger occupies A318–H341. Residues M447–K469 form a C2H2-type 2; degenerate zinc finger. The segment at Y581–H604 adopts a C2H2-type 3 zinc-finger fold. The disordered stretch occupies residues A674–S762. Polar residues predominate over residues D677 to E693. S680 carries the post-translational modification Phosphoserine. 2 stretches are compositionally biased toward low complexity: residues S716 to P727 and T741 to A759. C2H2-type zinc fingers lie at residues Q770 to H793 and Y801 to H824. Phosphoserine is present on residues S832, S894, S895, S898, and S899. A C2H2-type 6 zinc finger spans residues K908–H930. The segment at T960 to Q991 is disordered. C2H2-type zinc fingers lie at residues M1011–H1034, I1042–H1065, F1078–H1101, Y1154–H1176, and Y1184–H1207. The span at T1233–Q1253 shows a compositional bias: polar residues. The interval T1233–S1301 is disordered. Residues H1255 to H1267 show a composition bias toward basic residues. Residues D1271 to Q1283 show a composition bias toward acidic residues. 2 consecutive C2H2-type zinc fingers follow at residues V1318–H1340 and Y1375–H1397. Low complexity predominate over residues Q1445–S1467. Residues Q1445–K1471 are disordered. 2 C2H2-type zinc fingers span residues L1476–H1499 and W1552–H1574. Residues A1627 to V1865 are disordered. Over residues P1639–G1695 the composition is skewed to acidic residues. Low complexity predominate over residues Q1697–N1715. Composition is skewed to acidic residues over residues Q1716–E1758 and S1782–P1829. Residues S1833–H1851 show a composition bias toward low complexity. The C2H2-type 16 zinc-finger motif lies at F1873–H1895. The segment at P1933–N1959 is disordered. Residues N1942–T1952 are compositionally biased toward low complexity.

As to expression, expressed ubiquitously in the nervous system, in neurons not glia.

It localises to the nucleus. Functionally, required for normal development of ethanol tolerance. Relies on two distinct molecular pathways: a cellular stress pathway defined by hang, and a parallel pathway requiring octopamine. This is Zinc finger protein hangover (hang) from Drosophila melanogaster (Fruit fly).